The chain runs to 874 residues: Oxidation resistance protein 1 (874 aa).

The tract at residues 1–89 is disordered; the sequence is MTKDKNSPGL…KTLDKKDGRR (89 aa). Residues 64 to 89 show a composition bias toward basic and acidic residues; sequence RRSELKRFYTIDTGQKKTLDKKDGRR. At Ser-91 the chain carries Phosphoserine. One can recognise a LysM domain in the interval 99-142; the sequence is IEYTVESRDSLNSIALKFDTTPNELVQLNKLFSRAVVTGQVLYV. Position 119 is a phosphothreonine (Thr-119). Residues 151 to 169 are compositionally biased toward low complexity; the sequence is VESSPSLSPVSPLSPTSSE. The segment at 151-194 is disordered; sequence VESSPSLSPVSPLSPTSSEAEFDKTTNPDVHPTEATPSSTFTGI. 3 positions are modified to phosphoserine: Ser-201, Ser-202, and Ser-204. Positions 208–275 constitute a GRAM domain; it reads EAFTEKFLKI…EEVMSAAMYK (68 aa). Phosphoserine is present on residues Ser-294, Ser-334, and Ser-336. Disordered stretches follow at residues 299-406 and 431-537; these read CHSK…TNEV and FQGI…ITSA. Phosphothreonine is present on Thr-341. Ser-346 carries the post-translational modification Phosphoserine. Residues 347–362 are compositionally biased toward basic and acidic residues; sequence PIREELVSSDELRQDK. Over residues 363–391 the composition is skewed to polar residues; that stretch reads SSGASSESVQTVNQAEVESLTVKSESTGT. The span at 452–466 shows a compositional bias: basic and acidic residues; that stretch reads SFLHENSLHQEESQK. Position 496 is a phosphoserine (Ser-496). Residues 510-527 are compositionally biased toward polar residues; it reads HTMQQTKQQRENIQQVSQ. The mediates oxidative antimutator activity stretch occupies residues 551–578; that stretch reads QRHRLHKFLCLRVGKPMRKTFVSQASAT. Residues 713-874 form the TLDc domain; the sequence is ELLLPDQIEK…IQDIEIWAFE (162 aa).

The protein belongs to the OXR1 family.

It is found in the mitochondrion. In terms of biological role, may be involved in protection from oxidative damage. This is Oxidation resistance protein 1 (OXR1) from Homo sapiens (Human).